Consider the following 461-residue polypeptide: Nuclear distribution protein PAC1 (461 aa).

The 33-residue stretch at 9–41 folds into the LisH domain; sequence QAEELHKAIIAYLSANNLSSSATALRTELGLAE. Residues 61-88 adopt a coiled-coil conformation; it reads TSVVRLQKKIMDLESRNNALQSELDNAT. WD repeat units lie at residues 114-155, 157-197, 201-248, 251-290, 295-355, 357-396, 401-444, and 446-461; these read SHQN…RTIK, HTRP…KNIR, GHDH…CLKT, GHTA…PENR, GHDH…LKTL, GHDN…KCVK, VHER…VRIR, and VIAT…IFAN.

It belongs to the WD repeat LIS1/nudF family. Self-associates. Interacts with NDL1 and dynein.

It localises to the cytoplasm. The protein localises to the cytoskeleton. Its subcellular location is the spindle pole. Functionally, positively regulates the activity of the minus-end directed microtubule motor protein dynein. May enhance dynein-mediated microtubule sliding by targeting dynein to the microtubule plus end. Required for nuclear migration during vegetative growth as well as development. Required for retrograde early endosome (EE) transport from the hyphal tip. Required for localization of dynein to the mitotic spindle poles. Recruits additional proteins to the dynein complex at SPBs. The polypeptide is Nuclear distribution protein PAC1 (Pyricularia oryzae (strain 70-15 / ATCC MYA-4617 / FGSC 8958) (Rice blast fungus)).